We begin with the raw amino-acid sequence, 142 residues long: Large ribosomal subunit protein bL19 (142 aa).

It belongs to the bacterial ribosomal protein bL19 family.

This protein is located at the 30S-50S ribosomal subunit interface and may play a role in the structure and function of the aminoacyl-tRNA binding site. The sequence is that of Large ribosomal subunit protein bL19 from Rickettsia bellii (strain OSU 85-389).